A 24-amino-acid chain; its full sequence is Ascaphin-5 (24 aa).

Expressed by the skin glands.

The protein localises to the secreted. In terms of biological role, antimicrobial peptide. Synthetic peptide shows higher potency against Gram-negative bacteria than against Gram-positive bacteria. Has a very week hemolytic activity. The chain is Ascaphin-5 from Ascaphus truei (Coastal tailed frog).